The sequence spans 373 residues: 3 beta-hydroxysteroid dehydrogenase/Delta 5--&gt;4-isomerase type 2 (373 aa).

Catalysis depends on Tyr-155, which acts as the Proton acceptor. Lys-159 provides a ligand contact to NAD(+). Residues 288-308 (VPLLYWLAFLLETVSFLLSPI) traverse the membrane as a helical segment.

It belongs to the 3-beta-HSD family. Liver and kidney.

The protein localises to the endoplasmic reticulum membrane. It is found in the mitochondrion membrane. The enzyme catalyses a 3beta-hydroxy-Delta(5)-steroid + NAD(+) = a 3-oxo-Delta(5)-steroid + NADH + H(+). The catalysed reaction is a 3-oxo-Delta(5)-steroid = a 3-oxo-Delta(4)-steroid. It carries out the reaction pregnenolone + NAD(+) = pregn-5-ene-3,20-dione + NADH + H(+). It catalyses the reaction pregn-5-ene-3,20-dione = progesterone. The enzyme catalyses 3beta-hydroxyandrost-5-en-17-one + NAD(+) = androst-5-ene-3,17-dione + NADH + H(+). The catalysed reaction is androst-5-ene-3,17-dione = androst-4-ene-3,17-dione. The protein operates within lipid metabolism; steroid biosynthesis. Functionally, 3-beta-HSD is a bifunctional enzyme, that catalyzes the oxidative conversion of Delta(5)-ene-3-beta-hydroxy steroid, and the oxidative conversion of ketosteroids. The 3-beta-HSD enzymatic system plays a crucial role in the biosynthesis of all classes of hormonal steroids. This Mus musculus (Mouse) protein is 3 beta-hydroxysteroid dehydrogenase/Delta 5--&gt;4-isomerase type 2.